The chain runs to 226 residues: Sugar fermentation stimulation protein homolog (226 aa).

The protein belongs to the SfsA family.

This is Sugar fermentation stimulation protein homolog from Clostridium beijerinckii (strain ATCC 51743 / NCIMB 8052) (Clostridium acetobutylicum).